The chain runs to 568 residues: Type 3 secretion system secretin (568 aa).

A signal peptide spans 1–15 (MAAALLLWTAGTVCA). The disordered stretch occupies residues 203-292 (YGGDGPSDSG…RGSTPIIRAD (90 aa)). Positions 243–257 (LGGGKSPLPPGGTGQ) are enriched in gly residues. Basic and acidic residues predominate over residues 273 to 284 (NRLRSDELDDRG).

Belongs to the bacterial secretin family. T3SS SctC subfamily. The core secretion machinery of the T3SS is composed of approximately 20 different proteins, including cytoplasmic components, a base, an export apparatus and a needle. This subunit is part of the base, which anchors the injectisome in the bacterial cell envelope. Forms a stable homooligomeric complex.

It is found in the cell outer membrane. Functionally, component of the type III secretion system (T3SS), also called injectisome, which is used to inject bacterial effector proteins into eukaryotic host cells. Forms a ring-shaped multimeric structure with an apparent central pore in the outer membrane. The polypeptide is Type 3 secretion system secretin (Ralstonia nicotianae (strain ATCC BAA-1114 / GMI1000) (Ralstonia solanacearum)).